A 562-amino-acid polypeptide reads, in one-letter code: Dihydroxy-acid dehydratase (562 aa).

Asp-80 lines the Mg(2+) pocket. Cys-121 contributes to the [2Fe-2S] cluster binding site. Mg(2+)-binding residues include Asp-122 and Lys-123. Lys-123 bears the N6-carboxylysine mark. Position 194 (Cys-194) interacts with [2Fe-2S] cluster. Mg(2+) is bound at residue Glu-446. The active-site Proton acceptor is Ser-472.

Belongs to the IlvD/Edd family. In terms of assembly, homodimer. Requires [2Fe-2S] cluster as cofactor. It depends on Mg(2+) as a cofactor.

The enzyme catalyses (2R)-2,3-dihydroxy-3-methylbutanoate = 3-methyl-2-oxobutanoate + H2O. The catalysed reaction is (2R,3R)-2,3-dihydroxy-3-methylpentanoate = (S)-3-methyl-2-oxopentanoate + H2O. It participates in amino-acid biosynthesis; L-isoleucine biosynthesis; L-isoleucine from 2-oxobutanoate: step 3/4. The protein operates within amino-acid biosynthesis; L-valine biosynthesis; L-valine from pyruvate: step 3/4. Functions in the biosynthesis of branched-chain amino acids. Catalyzes the dehydration of (2R,3R)-2,3-dihydroxy-3-methylpentanoate (2,3-dihydroxy-3-methylvalerate) into 2-oxo-3-methylpentanoate (2-oxo-3-methylvalerate) and of (2R)-2,3-dihydroxy-3-methylbutanoate (2,3-dihydroxyisovalerate) into 2-oxo-3-methylbutanoate (2-oxoisovalerate), the penultimate precursor to L-isoleucine and L-valine, respectively. In Staphylococcus epidermidis (strain ATCC 35984 / DSM 28319 / BCRC 17069 / CCUG 31568 / BM 3577 / RP62A), this protein is Dihydroxy-acid dehydratase.